Reading from the N-terminus, the 361-residue chain is tRNA-specific 2-thiouridylase MnmA (361 aa).

ATP-binding positions include 8–15 (AMSGGVDS) and M35. The tract at residues 95-97 (NPD) is interaction with target base in tRNA. C100 (nucleophile) is an active-site residue. C100 and C196 form a disulfide bridge. Position 124 (G124) interacts with ATP. Positions 146 to 148 (KDQ) are interaction with tRNA. The active-site Cysteine persulfide intermediate is C196. The segment at 303 to 304 (RY) is interaction with tRNA.

This sequence belongs to the MnmA/TRMU family.

It localises to the cytoplasm. It catalyses the reaction S-sulfanyl-L-cysteinyl-[protein] + uridine(34) in tRNA + AH2 + ATP = 2-thiouridine(34) in tRNA + L-cysteinyl-[protein] + A + AMP + diphosphate + H(+). Functionally, catalyzes the 2-thiolation of uridine at the wobble position (U34) of tRNA, leading to the formation of s(2)U34. The chain is tRNA-specific 2-thiouridylase MnmA from Chlamydia felis (strain Fe/C-56) (Chlamydophila felis).